The sequence spans 233 residues: Phosphoglycolate phosphatase 2 (233 aa).

D13 functions as the Nucleophile in the catalytic mechanism. Residues D13 and D15 each coordinate Mg(2+). Position 152 (K152) interacts with substrate. D174 and D178 together coordinate Mg(2+).

This sequence belongs to the archaeal SPP-like hydrolase family. The cofactor is Mg(2+).

The enzyme catalyses 2-phosphoglycolate + H2O = glycolate + phosphate. Catalyzes the dephosphorylation of 2-phosphoglycolate. The chain is Phosphoglycolate phosphatase 2 from Saccharolobus solfataricus (strain ATCC 35092 / DSM 1617 / JCM 11322 / P2) (Sulfolobus solfataricus).